We begin with the raw amino-acid sequence, 545 residues long: Protein BTN1 (545 aa).

The interval 23–49 is disordered; sequence AHSSASDPRRTMVTNTSESPLASRQAT. Polar residues predominate over residues 34-49; it reads MVTNTSESPLASRQAT. 5 consecutive transmembrane segments (helical) span residues 66–86, 97–117, 127–147, 205–225, and 234–254; these read AFFL…TAAL, LVSF…PYFL, VWSC…FPAL, VGWF…AWWV, and GMAI…IILP. Positions 276–304 are disordered; it reads TEDDAVERSSSDDQPTTANDDRQDSTIHI. The next 3 helical transmembrane spans lie at 322–342, 408–428, and 440–460; these read MALL…VYAM, LLWL…TESL, and LVIV…VSVF.

Belongs to the battenin family.

The protein localises to the vacuole membrane. Involved in vacuolar transport and vacuole pH homeostasis. Also required for cytokinesis. The chain is Protein BTN1 (BTN1) from Mycosarcoma maydis (Corn smut fungus).